The sequence spans 152 residues: Lipoprotein signal peptidase (152 aa).

3 consecutive transmembrane segments (helical) span residues 5 to 25 (LFVL…FWIV), 61 to 81 (WFFV…LATH), and 84 to 104 (LNIW…GNFI). Residues Asp114 and Asp130 contribute to the active site. Residues 125 to 145 (IFNVADSYLTVGVILLVICLW) form a helical membrane-spanning segment.

Belongs to the peptidase A8 family.

It localises to the cell membrane. The catalysed reaction is Release of signal peptides from bacterial membrane prolipoproteins. Hydrolyzes -Xaa-Yaa-Zaa-|-(S,diacylglyceryl)Cys-, in which Xaa is hydrophobic (preferably Leu), and Yaa (Ala or Ser) and Zaa (Gly or Ala) have small, neutral side chains.. Its pathway is protein modification; lipoprotein biosynthesis (signal peptide cleavage). In terms of biological role, this protein specifically catalyzes the removal of signal peptides from prolipoproteins. This is Lipoprotein signal peptidase from Streptococcus pyogenes serotype M3 (strain ATCC BAA-595 / MGAS315).